Here is a 733-residue protein sequence, read N- to C-terminus: Photosystem I P700 chlorophyll a apoprotein A2 (733 aa).

8 helical membrane-spanning segments follow: residues 46–69, 134–157, 174–198, 272–290, 329–352, 368–394, 416–438, and 516–534; these read IFAS…FHVA, LYKG…LHLQ, LNHH…HVAI, MAHH…GHMY, LHMQ…QHMY, AALY…IFFV, AIIS…LYIH, and FLVH…LILV. [4Fe-4S] cluster contacts are provided by C558 and C567. 2 helical membrane-spanning segments follow: residues 574–595 and 642–664; these read AFYL…YWHW and LSVW…MFLI. Chlorophyll a is bound by residues H653, M661, and Y669. Position 670 (W670) interacts with phylloquinone. Residues 706–726 form a helical membrane-spanning segment; sequence LVGLVHFSVGYILTYAAFVIA.

The protein belongs to the PsaA/PsaB family. In terms of assembly, the PsaA/B heterodimer binds the P700 chlorophyll special pair and subsequent electron acceptors. PSI consists of a core antenna complex that captures photons, and an electron transfer chain that converts photonic excitation into a charge separation. The eukaryotic PSI reaction center is composed of at least 11 subunits. Requires P700 is a chlorophyll a/chlorophyll a' dimer, A0 is one or more chlorophyll a, A1 is one or both phylloquinones and FX is a shared 4Fe-4S iron-sulfur center. as cofactor.

It localises to the plastid. It is found in the chloroplast thylakoid membrane. The catalysed reaction is reduced [plastocyanin] + hnu + oxidized [2Fe-2S]-[ferredoxin] = oxidized [plastocyanin] + reduced [2Fe-2S]-[ferredoxin]. Functionally, psaA and PsaB bind P700, the primary electron donor of photosystem I (PSI), as well as the electron acceptors A0, A1 and FX. PSI is a plastocyanin/cytochrome c6-ferredoxin oxidoreductase, converting photonic excitation into a charge separation, which transfers an electron from the donor P700 chlorophyll pair to the spectroscopically characterized acceptors A0, A1, FX, FA and FB in turn. Oxidized P700 is reduced on the lumenal side of the thylakoid membrane by plastocyanin or cytochrome c6. The chain is Photosystem I P700 chlorophyll a apoprotein A2 from Thalassiosira pseudonana (Marine diatom).